The following is a 168-amino-acid chain: uncharacterized protein (168 aa).

2 consecutive transmembrane segments (helical) span residues 4-24 (IIALLFFFLIAFGYSLSPEEE) and 94-114 (IMVGIFAGQIALVAAVIGFAW).

This sequence to A.aeolicus aq_1446.

Its subcellular location is the cell membrane. This is an uncharacterized protein from Aquifex aeolicus (strain VF5).